We begin with the raw amino-acid sequence, 483 residues long: 6-phosphogluconate dehydrogenase, decarboxylating (483 aa).

NADP(+)-binding positions include Gly-10–Gly-15 and Asn-33–Thr-35. N6-acetyllysine is present on Lys-38. Residue Ser-57 is modified to Phosphoserine. Lys-59 carries the post-translational modification N6-acetyllysine. Residues Val-75–Ala-77 and Asn-103 contribute to the NADP(+) site. Residues Asn-103 and Ser-129–Gly-131 each bind substrate. A Phosphoserine modification is found at Ser-129. Lys-184 (proton acceptor) is an active-site residue. His-187 to Asn-188 lines the substrate pocket. The active-site Proton donor is the Glu-191. Positions 192, 261, 288, 447, and 453 each coordinate substrate. Ser-478–Tyr-481 contributes to the NADP(+) binding site.

Belongs to the 6-phosphogluconate dehydrogenase family. In terms of assembly, homodimer.

It is found in the cytoplasm. The catalysed reaction is 6-phospho-D-gluconate + NADP(+) = D-ribulose 5-phosphate + CO2 + NADPH. The protein operates within carbohydrate degradation; pentose phosphate pathway; D-ribulose 5-phosphate from D-glucose 6-phosphate (oxidative stage): step 3/3. Functionally, catalyzes the oxidative decarboxylation of 6-phosphogluconate to ribulose 5-phosphate and CO(2), with concomitant reduction of NADP to NADPH. In Rattus norvegicus (Rat), this protein is 6-phosphogluconate dehydrogenase, decarboxylating.